We begin with the raw amino-acid sequence, 1249 residues long: Myosin-1 (1249 aa).

The tract at residues 1–40 (MGHSRRPAGGEKKSRFGRSKAAADVGDGRQAGGKPQVRKA) is disordered. The 680-residue stretch at 50-729 (IGVSDLTLLS…TLFALEAMRD (680 aa)) folds into the Myosin motor domain. Residue 143–150 (GESGAGKT) participates in ATP binding. Position 371 is a phosphoserine (S371). The actin-binding stretch occupies residues 418–500 (SIGILDIYGF…PGVFAALNDA (83 aa)). 2 consecutive IQ domains span residues 733–753 (HNMAIRIQRAWRNYLRYRTEC) and 754–779 (AIRIQRFWRRMNGGLELLKLRDQGHT). The TH1 domain maps to 787–979 (RRRMSILGSR…PGEPPNSVSK (193 aa)). Disordered stretches follow at residues 959–1081 (DSYK…KAKA) and 1127–1249 (EAYL…DDDW). 2 stretches are compositionally biased toward low complexity: residues 1026-1035 (PQTAAAQPTP) and 1043-1061 (PVAAVAASHSRTSSTASAR). The span at 1062–1073 (APPPPPPAPPAA) shows a compositional bias: pro residues. The SH3 domain maps to 1074–1135 (AGPKKAKALY…PEAYLEEQVA (62 aa)). The segment covering 1137-1149 (TPKPAPPPPPPVA) has biased composition (pro residues). Over residues 1150-1170 (PRASPAPVNGSAAVAAAKAKA) the composition is skewed to low complexity. The segment covering 1199–1221 (VSMNSQGDSSGASGRGTPSSVSN) has biased composition (polar residues). Positions 1222–1235 (ASLAGGLAEALRAR) are enriched in low complexity.

The protein belongs to the TRAFAC class myosin-kinesin ATPase superfamily. Myosin family. As to quaternary structure, interacts (via IQ domains) with camA. Post-translationally, phosphorylation of the TEDS site (Ser-371) is required for the polarization of the actin cytoskeleton. Phosphorylation probably activates the myosin-I ATPase activity.

The protein localises to the cytoplasm. It is found in the cytoskeleton. It localises to the actin patch. Type-I myosin implicated in the organization of the actin cytoskeleton. Required for proper actin cytoskeleton polarization. At the cell cortex, assembles in patch-like structures together with proteins from the actin-polymerizing machinery and promotes actin assembly. Functions as actin nucleation-promoting factor (NPF) for the Arp2/3 complex. Plays an important role in polarized growth, spore germination, hyphal morphogenesis, and septal wall formation. The chain is Myosin-1 (myoA) from Emericella nidulans (strain FGSC A4 / ATCC 38163 / CBS 112.46 / NRRL 194 / M139) (Aspergillus nidulans).